Consider the following 212-residue polypeptide: Cytidylate kinase (212 aa).

9–17 (GPAAAGKGT) contributes to the ATP binding site.

The protein belongs to the cytidylate kinase family. Type 1 subfamily.

It is found in the cytoplasm. It catalyses the reaction CMP + ATP = CDP + ADP. The catalysed reaction is dCMP + ATP = dCDP + ADP. This Rhizobium meliloti (strain 1021) (Ensifer meliloti) protein is Cytidylate kinase.